Reading from the N-terminus, the 2144-residue chain is Alpha-protein kinase 2 (2144 aa).

The 99-residue stretch at 7–105 folds into the Ig-like 1 domain; the sequence is PERRTLCFLS…ICCSASLEVQ (99 aa). A disulfide bridge links cysteine 33 with cysteine 98. 11 disordered regions span residues 425–473, 500–575, 727–775, 845–864, 881–907, 1011–1065, 1316–1340, 1471–1509, 1565–1587, 1629–1696, and 1720–1754; these read ETAK…LQTM, SLAR…GAPG, EDNE…NVGS, QTQGSEPPRSTDKRSQDGKS, EASEDAVGETAADVENPPSTFSSTLPY, SCEA…PEGQ, DPVEDKELEVTDSPSEVSKTGEMEM, GPGEEGQGIPSVCSMSQTQDGGDRSLGEAGQRGTDETEV, CGNHVRSSDDLTNTPCTSSPKGN, ECES…GSGH, and ENSRKNSIVKKTPKFERSLSRTDEKRDPKRAPCKA. The span at 500–511 shows a compositional bias: basic and acidic residues; that stretch reads SLARERTDEKYP. Residues 853 to 864 are compositionally biased toward basic and acidic residues; it reads RSTDKRSQDGKS. Over residues 897-906 the composition is skewed to polar residues; that stretch reads PPSTFSSTLP. Residues 1574–1587 show a composition bias toward polar residues; sequence DLTNTPCTSSPKGN. Basic and acidic residues-rich tracts occupy residues 1631–1645 and 1732–1754; these read ESEKDPKSLLRRDPC and PKFERSLSRTDEKRDPKRAPCKA. In terms of domain architecture, Ig-like 2 spans 1759 to 1847; it reads PVLLKRIQAE…GKVTAEFNLT (89 aa). A disulfide bridge connects residues cysteine 1781 and cysteine 1831. An Alpha-type protein kinase domain is found at 1874 to 2106; the sequence is KEDVFNDSYF…YCKMLGLKSL (233 aa). The disordered stretch occupies residues 2109 to 2144; that stretch reads NSQKPKKPIVGKGRVPTNATQVKTPESETPPAERKT.

This sequence belongs to the protein kinase superfamily. Alpha-type protein kinase family. ALPK subfamily.

Its subcellular location is the basolateral cell membrane. The catalysed reaction is L-seryl-[protein] + ATP = O-phospho-L-seryl-[protein] + ADP + H(+). It catalyses the reaction L-threonyl-[protein] + ATP = O-phospho-L-threonyl-[protein] + ADP + H(+). Protein kinase that recognizes phosphorylation sites in which the surrounding peptides have an alpha-helical conformation. Regulates cardiac development and cardiomyocyte differentiation by negatively regulating Wnt/beta-catenin signaling. The sequence is that of Alpha-protein kinase 2 from Mus musculus (Mouse).